The sequence spans 1140 residues: DNA damage-binding protein 1 (1140 aa).

An N-acetylserine modification is found at serine 2. The interaction with CDT1 stretch occupies residues 2-768; it reads SYNYVVTAQK…QALSSSVSSS (767 aa). Positions 13–356 are WD repeat beta-propeller A; that stretch reads TAVNGCVTGH…VVAMETFTNL (344 aa). Positions 391-708 are WD repeat beta-propeller B; Interaction with CUL4A; it reads RNGIGIHEHA…LTIGTIDEIQ (318 aa). A WD repeat beta-propeller C region spans residues 709 to 1043; that stretch reads KLHIRTVPLY…NGMIGLVTSL (335 aa). Positions 771-1140 are interaction with CDT1 and CUL4A; the sequence is FSSSTAPHET…KVVEELTRIH (370 aa). Lysine 1067 bears the N6-acetyllysine mark. Lysine 1121 participates in a covalent cross-link: Glycyl lysine isopeptide (Lys-Gly) (interchain with G-Cter in SUMO2). Threonine 1125 bears the Phosphothreonine mark.

It belongs to the DDB1 family. In terms of assembly, component of the UV-DDB complex which includes DDB1 and DDB2; the heterodimer dimerizes to give rise to a heterotetramer when bound to damaged DNA. The UV-DDB complex interacts with monoubiquitinated histone H2A and binds to XPC via the DDB2 subunit. Component of numerous DCX (DDB1-CUL4-X-box) E3 ubiquitin-protein ligase complexes which consist of a core of DDB1, CUL4A or CUL4B and RBX1. DDB1 may recruit specific substrate targeting subunits to the DCX complex. These substrate targeting subunits are generally known as DCAF (DDB1- and CUL4-associated factor) or CDW (CUL4-DDB1-associated WD40-repeat) proteins. Interacts with AMBRA1, ATG16L1, BTRC, CRBN, DCAF1, DCAF4, DCAF5, DCAF6, DCAF7, DCAF8, DCAF9, DCAF10, DCAF11, DCAF12, DCAF15, DCAF16, DCAF17, DDA1, DET1, DTL, ERCC8, FBXW5, FBXW8, GRWD1, KATNB1, NLE1, NUP43, PAFAH1B1, PHIP, PWP1, RBBP4, RBBP5, RBBP7, COP1, SNRNP40, DCAF1, WDR5, WDR5B, WDR12, WDR26, WDR39, WDR42, WDR53, WDR59, WDR61, WSB1, WSB2, LRWD1 and WDTC1. DCX complexes may associate with the COP9 signalosome, and this inhibits the E3 ubiquitin-protein ligase activity of the complex. Interacts with NF2, TSC1 and TSC2. Interacts with AGO1 and AGO2. Associates with the E3 ligase complex containing DYRK2, EDD/UBR5, DDB1 and DCAF1 proteins (EDVP complex). Interacts directly with DYRK2. DCX(DTL) complex interacts with FBXO11; does not ubiquitinate and degradate FBXO11. Interacts with TRPC4AP. Interacts with CRY1 and CRY2. The DDB1-CUL4A complex interacts with CRY1. Component of the DCX(DCAF13) E3 ubiquitin ligase complex, at least composed of CUL4 (CUL4A or CUL4B), DDB1, DCAF13 and RBX1. Interacts with DCAF13 (via WD40 domain). In terms of processing, phosphorylated by ABL1. Ubiquitinated by CUL4A. Subsequently degraded by ubiquitin-dependent proteolysis. Post-translationally, acetylated, promoting interaction with CUL4 (CUL4A or CUL4B) and subsequent formation of DCX (DDB1-CUL4-X-box) E3 ubiquitin-protein ligase complexes. Deacetylation by SIRT7 impairs the interaction with CUL4 (CUL4A or CUL4B) and formation of DCX (DDB1-CUL4-X-box) E3 ubiquitin-protein ligase complexes. As to expression, widely expressed. Expressed in pregnant, lactating and involuting mammary gland. Expressed in oocytes (at protein level).

Its subcellular location is the cytoplasm. It is found in the nucleus. The protein operates within protein modification; protein ubiquitination. Protein, which is both involved in DNA repair and protein ubiquitination, as part of the UV-DDB complex and DCX (DDB1-CUL4-X-box) complexes, respectively. Core component of the UV-DDB complex (UV-damaged DNA-binding protein complex), a complex that recognizes UV-induced DNA damage and recruit proteins of the nucleotide excision repair pathway (the NER pathway) to initiate DNA repair. The UV-DDB complex preferentially binds to cyclobutane pyrimidine dimers (CPD), 6-4 photoproducts (6-4 PP), apurinic sites and short mismatches. Also functions as a component of numerous distinct DCX (DDB1-CUL4-X-box) E3 ubiquitin-protein ligase complexes which mediate the ubiquitination and subsequent proteasomal degradation of target proteins. The functional specificity of the DCX E3 ubiquitin-protein ligase complex is determined by the variable substrate recognition component recruited by DDB1. DCX(DDB2) (also known as DDB1-CUL4-ROC1, CUL4-DDB-ROC1 and CUL4-DDB-RBX1) may ubiquitinate histone H2A, histone H3 and histone H4 at sites of UV-induced DNA damage. The ubiquitination of histones may facilitate their removal from the nucleosome and promote subsequent DNA repair. DCX(DDB2) also ubiquitinates XPC, which may enhance DNA-binding by XPC and promote NER. DCX(DTL) plays a role in PCNA-dependent polyubiquitination of CDT1 and MDM2-dependent ubiquitination of TP53 in response to radiation-induced DNA damage and during DNA replication. DCX(ERCC8) (the CSA complex) plays a role in transcription-coupled repair (TCR). The DDB1-CUL4A-DTL E3 ligase complex regulates the circadian clock function by mediating the ubiquitination and degradation of CRY1. DDB1-mediated CRY1 degradation promotes FOXO1 protein stability and FOXO1-mediated gluconeogenesis in the liver. By acting on TET dioxygenses, essential for oocyte maintenance at the primordial follicle stage, hence essential for female fertility. Maternal factor required for proper zygotic genome activation and genome reprogramming. The polypeptide is DNA damage-binding protein 1 (Ddb1) (Mus musculus (Mouse)).